A 271-amino-acid chain; its full sequence is DNA repair protein RecO (271 aa).

This sequence belongs to the RecO family.

Functionally, involved in DNA repair and RecF pathway recombination. This Synechococcus sp. (strain CC9311) protein is DNA repair protein RecO.